Reading from the N-terminus, the 86-residue chain is Exopolysaccharide production repressor protein (86 aa).

A helical transmembrane segment spans residues 18–38; the sequence is FAVTLAASVFLQVVYFLSLLF. The tract at residues 44 to 86 is disordered; it reads TRESDRSIHSGTRQADQPQKRDRDKTEQSNVPKLDPRRKRRTP. A compositionally biased stretch (basic and acidic residues) spans 61–70; sequence PQKRDRDKTE.

The protein resides in the cell membrane. The protein operates within glycan metabolism; exopolysaccharide biosynthesis. Functionally, inhibition of exopolysaccharide synthesis (EPS) and nodulation ability (NOD). The protein is Exopolysaccharide production repressor protein (exoX) of Rhizobium leguminosarum bv. phaseoli.